A 284-amino-acid chain; its full sequence is MVLMIVSGRSGSGKSVALRALEDMGFYCVDNLPVVLLPDLARTLADRQISAAVSIDVRNMPESPEIFEQAMNNLPDAFSPQLLFLDADRNTLIRRYSDTRRLHPLSSKNLSLESAIDQESDLLEPLRSRADLIVDTSEMSVHELAEMLRTRLLGKRERELTMVFESFGFKHGIPIDADYVFDVRFLPNPHWDPKLRPMTGLDKPVAAFLDRHTEVHNFIYQTRSYLELWLPMLETNNRSYLTVAIGCTGGKHRSVYIAEQLADYFRSRGKNVQSRHRTLEKRKT.

8–15 is an ATP binding site; it reads GRSGSGKS. Position 56 to 59 (56 to 59) interacts with GTP; the sequence is DVRN. The tract at residues 266 to 284 is RNA-binding; sequence RSRGKNVQSRHRTLEKRKT.

This sequence belongs to the RapZ-like family. RapZ subfamily. In terms of assembly, homotrimer.

Modulates the synthesis of GlmS, by affecting the processing and stability of the regulatory small RNA GlmZ. When glucosamine-6-phosphate (GlcN6P) concentrations are high in the cell, RapZ binds GlmZ and targets it to cleavage by RNase E. Consequently, GlmZ is inactivated and unable to activate GlmS synthesis. Under low GlcN6P concentrations, RapZ is sequestered and inactivated by an other regulatory small RNA, GlmY, preventing GlmZ degradation and leading to synthesis of GlmS. This chain is RNase adapter protein RapZ, found in Citrobacter koseri (strain ATCC BAA-895 / CDC 4225-83 / SGSC4696).